We begin with the raw amino-acid sequence, 947 residues long: Bifunctional glutamine synthetase adenylyltransferase/adenylyl-removing enzyme (947 aa).

Residues 1-443 (MQLPSSLVSV…VFETLIGDDE (443 aa)) are adenylyl removase. Residues 451-947 (ARHFHELWDM…VKQAWNQWFA (497 aa)) form an adenylyl transferase region.

It belongs to the GlnE family. Mg(2+) is required as a cofactor.

It carries out the reaction [glutamine synthetase]-O(4)-(5'-adenylyl)-L-tyrosine + phosphate = [glutamine synthetase]-L-tyrosine + ADP. The catalysed reaction is [glutamine synthetase]-L-tyrosine + ATP = [glutamine synthetase]-O(4)-(5'-adenylyl)-L-tyrosine + diphosphate. In terms of biological role, involved in the regulation of glutamine synthetase GlnA, a key enzyme in the process to assimilate ammonia. When cellular nitrogen levels are high, the C-terminal adenylyl transferase (AT) inactivates GlnA by covalent transfer of an adenylyl group from ATP to specific tyrosine residue of GlnA, thus reducing its activity. Conversely, when nitrogen levels are low, the N-terminal adenylyl removase (AR) activates GlnA by removing the adenylyl group by phosphorolysis, increasing its activity. The regulatory region of GlnE binds the signal transduction protein PII (GlnB) which indicates the nitrogen status of the cell. This chain is Bifunctional glutamine synthetase adenylyltransferase/adenylyl-removing enzyme, found in Vibrio parahaemolyticus serotype O3:K6 (strain RIMD 2210633).